A 254-amino-acid polypeptide reads, in one-letter code: Transcription factor bHLH51 (254 aa).

The region spanning 62 to 111 (SLSRSHRLAEKRRRDRINSHLTALRKLVPNSDKLDKAALLATVIEQVKEL) is the bHLH domain.

In terms of assembly, homodimer. Expressed constitutively in roots, stems, and flowers.

The protein localises to the nucleus. The polypeptide is Transcription factor bHLH51 (BHLH51) (Arabidopsis thaliana (Mouse-ear cress)).